The primary structure comprises 300 residues: Uricase (300 aa).

Residue alanine 2 is modified to N-acetylalanine. 2 positions are modified to N6-acetyllysine; alternate: lysine 6 and lysine 19. Lysine 6 and lysine 19 each carry N6-succinyllysine; alternate. Lysine 19 serves as the catalytic Charge relay system. N6-acetyllysine is present on residues lysine 23 and lysine 32. Serine 35 and serine 59 each carry phosphoserine. The active-site Charge relay system is threonine 64. Urate-binding residues include threonine 64 and aspartate 65. 3 positions are modified to N6-acetyllysine: lysine 114, lysine 118, and lysine 160. Residue phenylalanine 166 coordinates urate. N6-acetyllysine occurs at positions 171 and 181. A urate-binding site is contributed by arginine 183. 2 positions are modified to N6-acetyllysine; alternate: lysine 217 and lysine 224. Residues lysine 217 and lysine 224 each carry the N6-succinyllysine; alternate modification. At serine 228 the chain carries Phosphoserine. Urate contacts are provided by valine 231, glutamine 232, and asparagine 258. Histidine 260 serves as the catalytic Charge relay system. N6-acetyllysine is present on lysine 274. At tyrosine 285 the chain carries Phosphotyrosine. Residues 298–300 (SRL) carry the Microbody targeting signal motif.

The protein belongs to the uricase family.

Its subcellular location is the peroxisome. It carries out the reaction urate + O2 + H2O = 5-hydroxyisourate + H2O2. The protein operates within purine metabolism; urate degradation; (S)-allantoin from urate: step 1/3. Functionally, catalyzes the oxidation of uric acid to 5-hydroxyisourate, which is further processed to form (S)-allantoin. In Oryctolagus cuniculus (Rabbit), this protein is Uricase (UOX).